Consider the following 63-residue polypeptide: MARYRRHSRSRSRSRYRRRRRRRSRHRNRRRTYRRSRRHSRRRRGRRRGYSRRRYSRRGRRRY.

The disordered stretch occupies residues M1 to Y63.

This sequence belongs to the protamine P1 family. Testis.

The protein localises to the nucleus. The protein resides in the chromosome. In terms of biological role, protamines substitute for histones in the chromatin of sperm during the haploid phase of spermatogenesis. They compact sperm DNA into a highly condensed, stable and inactive complex. This chain is Sperm protamine P1 (PRM1), found in Pseudantechinus macdonnellensis (Fat-tailed marsupial mouse).